The primary structure comprises 692 residues: Translation initiation factor IF-2 (692 aa).

Residues 194 to 363 (PRPPIVTVMG…LLVAEMEDLK (170 aa)) enclose the tr-type G domain. A G1 region spans residues 203 to 210 (GHVDHGKT). 203–210 (GHVDHGKT) is a binding site for GTP. The segment at 228 to 232 (GITQH) is G2. Residues 249–252 (DTPG) are G3. GTP-binding positions include 249-253 (DTPGH) and 303-306 (NKID). Positions 303–306 (NKID) are G4. The tract at residues 339 to 341 (SAK) is G5.

Belongs to the TRAFAC class translation factor GTPase superfamily. Classic translation factor GTPase family. IF-2 subfamily.

The protein localises to the cytoplasm. Functionally, one of the essential components for the initiation of protein synthesis. Protects formylmethionyl-tRNA from spontaneous hydrolysis and promotes its binding to the 30S ribosomal subunits. Also involved in the hydrolysis of GTP during the formation of the 70S ribosomal complex. The sequence is that of Translation initiation factor IF-2 from Thermoanaerobacter sp. (strain X514).